We begin with the raw amino-acid sequence, 749 residues long: Amyloid-beta A4 precursor protein-binding family A member 2 (749 aa).

2 disordered regions span residues 1–94 (MAHQ…PEEE) and 130–343 (DTDE…NNIP). Ser11 carries the post-translational modification Phosphoserine. Polar residues predominate over residues 70–80 (GDSSSDYVNNT). Acidic residues-rich tracts occupy residues 81–94 (SEEE…PEEE) and 131–142 (TDECQEAVEEWT). The segment at 185–270 (HYCASKEGYQ…SAEACPPIKA (86 aa)) is STXBP1-binding. Ser208 carries the phosphoserine modification. Acidic residues predominate over residues 218–227 (DLEDQEEDID). The segment covering 237–247 (LSMTSITSASE) has biased composition (polar residues). The segment covering 305 to 315 (RTPEERPKWPH) has biased composition (basic and acidic residues). The PID domain maps to 366 to 555 (LIDGIIFAAN…IINTQEMYND (190 aa)). PDZ domains follow at residues 568-653 (ELQL…NIVS) and 659-735 (TVLI…MPAA).

In terms of assembly, part of a multimeric complex containing STXBP1 and syntaxin-1. Binds to the cytoplasmic domain of amyloid-beta protein, and to the nuclear factor NF-kappa-B/p65 via its PDZ domain. Interacts with the N-terminal domain of NECAB3.

Its function is as follows. Putative function in synaptic vesicle exocytosis by binding to STXBP1, an essential component of the synaptic vesicle exocytotic machinery. May modulate processing of the amyloid-beta precursor protein (APP) and hence formation of APP-beta. This chain is Amyloid-beta A4 precursor protein-binding family A member 2 (APBA2), found in Pongo abelii (Sumatran orangutan).